A 381-amino-acid polypeptide reads, in one-letter code: Protein TRIGALACTOSYLDIACYLGLYCEROL 2, chloroplastic (381 aa).

A chloroplast-targeting transit peptide spans 1–45 (MIGNPVIQVPSSLMPSSSMIACPRVSPNGVPYLPPKPRTRHLVVR). The Stromal portion of the chain corresponds to 46-96 (AASNSDAAHGQPSSDGGKNPLTVVLDVPRNIWRQTLKPLSDFGFGKRSIWE). A helical membrane pass occupies residues 97-117 (GGVGLFIVSGATLLALSWAWL). At 118–381 (RGFQMRSKFR…LLIKSLSRLL (264 aa)) the chain is on the chloroplast intermembrane side.

Homomultimer. Substrate-binding subunit of the TGD complex, a lipid translocator at the inner chloroplast envelope membrane made of TGD1, TGD2 and TGD3. Interacts with TGD1 and TGD3 with an overall subunit stoichiometry of 2 TGD1, 2 TGD3 and 8 to 12 TGD2. Interacts with TGD5.

It is found in the plastid. The protein localises to the chloroplast inner membrane. Its function is as follows. Component of a phosphatidic acid/lipid transport complex in the chloroplast envelope. Specifically binds phosphatidic acid (PA). Involved in lipid transfer from the endoplasmic reticulum (ER) to plastids, and necessary for thylakoids formation. This is Protein TRIGALACTOSYLDIACYLGLYCEROL 2, chloroplastic from Arabidopsis thaliana (Mouse-ear cress).